The chain runs to 366 residues: L-tyrosine C(3)-methyltransferase (366 aa).

Polar residues predominate over residues 1-12 (MTISLENTTVGQ). The interval 1–22 (MTISLENTTVGQNPAGGPPTGK) is disordered. An S-adenosyl-L-methionine-binding site is contributed by E223.

This sequence belongs to the class I-like SAM-binding methyltransferase superfamily. Cation-independent O-methyltransferase family.

The enzyme catalyses L-tyrosine + S-adenosyl-L-methionine = 3-methyl-L-tyrosine + S-adenosyl-L-homocysteine + H(+). The protein operates within antibiotic biosynthesis. Its function is as follows. C-methyltransferase that mediates the methylation of tyrosine into 3-methyl-L-tyrosine (3-Me-Tyr) in biosynthesis of saframycin A, a potent antitumor antibiotic that belongs to the tetrahydroisoquinoline family. Involved in biosynthesis of 3-hydroxy-5-methyl-O-methyltyrosine (3-OH-5-Me-OMe-Tyr), a core structure of saframycin A. The protein is L-tyrosine C(3)-methyltransferase of Streptomyces lavendulae.